The primary structure comprises 438 residues: Putative F-box/FBD/LRR-repeat protein At2g05300 (438 aa).

Residues 13–59 (EDRISQLPDPLLTQILNLLPTEEAVKTSVLSTRWRTLWLWVPNLELS) enclose the F-box domain. LRR repeat units lie at residues 135-166 (CDSLVSLRLYRLSLVDAEFVSLPCLKILRLKD), 167-192 (IVFHNETTFERLVSSCPVLEELKIDV), 235-261 (CLIIDDSVSESFVVTDLESNAKFDISL), and 318-346 (YVTLNASELEWFPIFLRSSPNLKSLILER). In terms of domain architecture, FBD spans 362-409 (SMSSVPECLLTSLEFVEFKAPICGLGPEMMLVWYFLKNSPTLKKLTLP).

The polypeptide is Putative F-box/FBD/LRR-repeat protein At2g05300 (Arabidopsis thaliana (Mouse-ear cress)).